We begin with the raw amino-acid sequence, 188 residues long: Photosystem I assembly protein Ycf4 (188 aa).

Helical transmembrane passes span 26-48 (FFWA…SSYF) and 63-85 (FIPQ…GYLW).

It belongs to the Ycf4 family.

The protein resides in the cellular thylakoid membrane. Functionally, seems to be required for the assembly of the photosystem I complex. This Synechocystis sp. (strain ATCC 27184 / PCC 6803 / Kazusa) protein is Photosystem I assembly protein Ycf4.